The following is a 410-amino-acid chain: Sprouty-related, EVH1 domain-containing protein 2 (410 aa).

In terms of domain architecture, WH1 spans 5 to 122 (THPDDDSYIV…RGVRKAIEDL (118 aa)). Positions 127-171 (TTSSSTLHNEAELGDDDVFTTATDSSSNSSQKREPTTRTISSPTS) are disordered. The span at 146 to 156 (TTATDSSSNSS) shows a compositional bias: polar residues. The 56-residue stretch at 197 to 252 (SYPQVTFPEDDEEIVRINPREKIWMTGYEDYRHAPVRGKYLDTTEDADSYVRFAKG) folds into the KBD domain. 2 positions are modified to phosphotyrosine: Tyr-224 and Tyr-227. The tract at residues 274-294 (DPKGSVIKTQPPRAKSRRRKE) is disordered. The region spanning 300–408 (RCVYCRDMFN…CRCCGGKHKA (109 aa)) is the SPR domain.

In terms of assembly, homodimer and heterodimer. Able to interact with SPRED1 to form heterodimers. Interacts with RAS. May interact with ZDHHC13 (via ANK repeats) and ZDHHC17 (via ANK repeats). Interacts with TESK1. Interacts with NF1. Post-translationally, phosphorylated on serine and threonine residues. Phosphorylated on tyrosine. Phosphorylation of Tyr-224 and Tyr-227 are required for ubiquitination. Ubiquitinated; leading to degradation by the proteasome. Predominantly expressed in lung, liver and testis. In testis, it is specially found in mature spermatids projecting into the lumen of the seminiferous. Strongly expressed in glandular epithelia. Also expressed in embryonic tissues such as heart, lung, liver and brain.

It is found in the cell membrane. Its subcellular location is the cytoplasmic vesicle. The protein localises to the secretory vesicle membrane. The protein resides in the cytoplasm. Its function is as follows. Negatively regulates Ras signaling pathways and downstream activation of MAP kinases. Recruits and translocates NF1 to the cell membrane, thereby enabling NF1-dependent hydrolysis of active GTP-bound Ras to inactive GDP-bound Ras. Inhibits fibroblast growth factor (FGF)-induced retinal lens fiber differentiation, probably by inhibiting FGF-mediated phosphorylation of ERK1/2. Inhibits TGFB-induced epithelial-to-mesenchymal transition in lens epithelial cells. The chain is Sprouty-related, EVH1 domain-containing protein 2 (Spred2) from Mus musculus (Mouse).